Reading from the N-terminus, the 66-residue chain is Phylloseptin-S4 (66 aa).

Residues 1–22 form the signal peptide; it reads MAFLKKSLFLVLFLGLVSLSIC. The propeptide occupies 23-46; sequence EEEKRETEEEEHDQEEDDKSEEKR. Residues 25–44 form a disordered region; sequence EKRETEEEEHDQEEDDKSEE. Over residues 30 to 41 the composition is skewed to acidic residues; that stretch reads EEEEHDQEEDDK. Leu65 bears the Leucine amide mark.

In terms of tissue distribution, expressed by the skin glands.

The protein resides in the secreted. The protein localises to the target cell membrane. Antimicrobial peptide with high activity against Gram-positive bacteria, moderate activity against Gram-negative bacteria, and moderate activity against fungi. Acts by causing bacterial membrane disruption inducing leakage of the intracellular content followed by cell death. It adopts an alpha-helical amphipathic structure in membrane environments. Also shows highly potent antiparasitic activity against Leishmania species. Shows moderate hemolytic activity on human erythrocytes (LC(50)=33 uM). Is also active on human monocytes (IC(50)=23 uM). The protein is Phylloseptin-S4 of Phyllomedusa sauvagei (Sauvage's leaf frog).